We begin with the raw amino-acid sequence, 98 residues long: Prostate and testis expressed protein 3 (98 aa).

The signal sequence occupies residues Met-1–Ser-20. A UPAR/Ly6 domain is found at Leu-21–Lys-97. Cystine bridges form between Cys-23-Cys-50, Cys-26-Cys-35, Cys-42-Cys-68, and Cys-72-Cys-88.

Belongs to the PATE family. In terms of tissue distribution, specifically expressed in prostate and testis.

The protein resides in the secreted. In Homo sapiens (Human), this protein is Prostate and testis expressed protein 3 (PATE3).